We begin with the raw amino-acid sequence, 329 residues long: MPRRPLLEFEKPLVELEQQIEQIRQLARDSEVDVSQQLQQLESLAARRRQEIFQGLTPAQKIQVARHPQRPSTLDFIQMFCDDWVELHGDRRGNDDQALIGGVGRVGNRAVMLIGHQKGRDTKENVARNFGMAAPGGYRKAMRLMDHADRFRLPILTFIDTPGAYAGLEAEEQGQGEAIAVNLREMFRLRVPVIATVIGEGGSGGALGIGVADRLLMFEHSVYTVASPEACASILWRDAAKAPDAAAALRITGRDLLELGVVDEVLEEPSGGNNWAPLEAGENLRAAIERHLEQLLSLSEQQLREARYSKFRAMGRFLEKTSQDVDKAA.

Residues 40-294 (QLESLAARRR…RAAIERHLEQ (255 aa)) enclose the CoA carboxyltransferase C-terminal domain.

Belongs to the AccA family. As to quaternary structure, acetyl-CoA carboxylase is a heterohexamer composed of biotin carboxyl carrier protein (AccB), biotin carboxylase (AccC) and two subunits each of ACCase subunit alpha (AccA) and ACCase subunit beta (AccD).

It is found in the cytoplasm. It catalyses the reaction N(6)-carboxybiotinyl-L-lysyl-[protein] + acetyl-CoA = N(6)-biotinyl-L-lysyl-[protein] + malonyl-CoA. It participates in lipid metabolism; malonyl-CoA biosynthesis; malonyl-CoA from acetyl-CoA: step 1/1. Functionally, component of the acetyl coenzyme A carboxylase (ACC) complex. First, biotin carboxylase catalyzes the carboxylation of biotin on its carrier protein (BCCP) and then the CO(2) group is transferred by the carboxyltransferase to acetyl-CoA to form malonyl-CoA. The polypeptide is Acetyl-coenzyme A carboxylase carboxyl transferase subunit alpha (Synechococcus sp. (strain CC9605)).